The primary structure comprises 541 residues: MKSTDSAKCLGSKSLAICCLLLHLLLCIRPAVSQTQSPQRYLHNVDSNSNNNERLHQILKGSGAGSGATQLNWPQPPKQTVPNVKTELAKLNNTYVYQNAWPANNVKLGAVTAVSFDKAGNVVIFHRVNRVWGQTTFDNRNQYQEKYRGPIRESTILALEPATGKVQYDWGKNFFYMPHGLTVDPEDNVWLTDVAMHQVFKFPPRGGDGKPALTLGDAFQPGSGRKFCKPTSVAVLDNGDFFVADGYCNARILKYSRKGELILFWGQNTFSGISYDVAPQNFFAIPHALTLVPELQLLCAADRENGRVQCFLSSNGTFHSQYHNQLIGDRLFSMAYTPAAGGQLVIVNGPTAELGIHPEHYNEVHGFVLSMRSKQLVSKFGPNNLQFQNPHDVAVTADGNEIYVAELNPMRIHKFVHRSLAKPMSLSASKDSRDSAISQAVGGDQVPAVAVHHPSGKAILVASLMLLFAGSTFALALIFARRRKRGCLPFGARGRRHAWEKSDGFKLGGLLDRDRNGFEKLDQQASDEEQETKTLASAQYA.

An N-terminal signal peptide occupies residues 1–33 (MKSTDSAKCLGSKSLAICCLLLHLLLCIRPAVS). Over 34–458 (QTQSPQRYLH…VAVHHPSGKA (425 aa)) the chain is Extracellular. Residue Asn92 is glycosylated (N-linked (GlcNAc...) asparagine). NHL repeat units follow at residues 164 to 205 (GKVQ…FPPR), 215 to 258 (LGDA…YSRK), and 272 to 314 (GISY…FLSS). 2 cysteine pairs are disulfide-bonded: Cys228–Cys248 and Cys299–Cys310. Asn315 carries N-linked (GlcNAc...) asparagine glycosylation. The stretch at 374–418 (KQLVSKFGPNNLQFQNPHDVAVTADGNEIYVAELNPMRIHKFVHR) is one NHL 4 repeat. Residues 459 to 479 (ILVASLMLLFAGSTFALALIF) form a helical membrane-spanning segment. The Cytoplasmic portion of the chain corresponds to 480-541 (ARRRKRGCLP…TKTLASAQYA (62 aa)). Positions 521–541 (LDQQASDEEQETKTLASAQYA) are disordered.

Belongs to the peptidyl-alpha-hydroxyglycine alpha-amidating lyase family. The cofactor is Zn(2+). Post-translationally, N-glycosylated. In terms of tissue distribution, widely expressed. In mature larvae, it is ubiquitously expressed with a low expression in all cells and a stronger expression in a subset of neurons. Colocalizes with neuropeptide proctolin. In adults, weak expression is observed in most neuronal cell bodies and in scattered large cells throughout the protocerebrum and also in the subesophageal neuromeres (at protein level).

The protein resides in the cell membrane. The catalysed reaction is a [peptide]-C-terminal (2S)-2-hydroxyglycine = a [peptide]-C-terminal amide + glyoxylate. Its function is as follows. Peptidyl-alpha-hydroxylglycine alpha-amidating lyase that catalyzes an essential reaction in C-terminal alpha-amidation of peptides. Mediates the dismutation of the unstable peptidyl(2-hydroxyglycine) intermediate to glyoxylate and the corresponding desglycine peptide amide. C-terminal amidation of peptides such as neuropeptides is essential for full biological activity. The polypeptide is Peptidyl-alpha-hydroxyglycine alpha-amidating lyase 1 (Pal1) (Drosophila melanogaster (Fruit fly)).